The sequence spans 405 residues: Arginine biosynthesis bifunctional protein ArgJ (405 aa).

Substrate contacts are provided by T152, K178, T189, E276, N400, and T405. Residue T189 is the Nucleophile of the active site.

It belongs to the ArgJ family. In terms of assembly, heterotetramer of two alpha and two beta chains.

It is found in the cytoplasm. The enzyme catalyses N(2)-acetyl-L-ornithine + L-glutamate = N-acetyl-L-glutamate + L-ornithine. It catalyses the reaction L-glutamate + acetyl-CoA = N-acetyl-L-glutamate + CoA + H(+). The protein operates within amino-acid biosynthesis; L-arginine biosynthesis; L-ornithine and N-acetyl-L-glutamate from L-glutamate and N(2)-acetyl-L-ornithine (cyclic): step 1/1. It functions in the pathway amino-acid biosynthesis; L-arginine biosynthesis; N(2)-acetyl-L-ornithine from L-glutamate: step 1/4. Catalyzes two activities which are involved in the cyclic version of arginine biosynthesis: the synthesis of N-acetylglutamate from glutamate and acetyl-CoA as the acetyl donor, and of ornithine by transacetylation between N(2)-acetylornithine and glutamate. The sequence is that of Arginine biosynthesis bifunctional protein ArgJ from Pseudomonas savastanoi pv. phaseolicola (strain 1448A / Race 6) (Pseudomonas syringae pv. phaseolicola (strain 1448A / Race 6)).